Consider the following 84-residue polypeptide: Small ribosomal subunit protein uS17 (84 aa).

Belongs to the universal ribosomal protein uS17 family. As to quaternary structure, part of the 30S ribosomal subunit.

In terms of biological role, one of the primary rRNA binding proteins, it binds specifically to the 5'-end of 16S ribosomal RNA. This is Small ribosomal subunit protein uS17 from Proteus mirabilis (strain HI4320).